A 600-amino-acid polypeptide reads, in one-letter code: MTDSSPAASPSSLKIYFRLLGYVRPYISLFLISIVGFLIFASTQPMLGYILKYFVDGLSNPEAVLFPTVPYLRDLQLLQAVPLLIILIAAWQGLGSYLGNYFLAKVSLGLVHDLRVQLFNNLLVLPNRYFDKHNSGHLISRITFNVTMVTGAATDAIKVVIREGMTVIFLFASLLFMNWKLTLVMVAILPLIAVMVRTASKKFRKQSKKIQLAMGDVTHVASETIQGYRVVRSFGGEAYEEKRFLDASQGNTDKQLRMTRTGAIYTPLLQLVIYSAMAILMFLVLYLRGDASAGDMVAYITLAGLLPKPIRQLSEVSSTIQKGVAGAESIFEQLDVEPEVDTGTVERDSVSGRLDVRNLSFTYPGTERQVLDDISFSVEPGQMVALVGRSGSGKSTLANLIPRFYHHDKGEILIDGVEVEQYKLLNLRRHIAQVTQHVTLFSDTVANNIAYGDLAGAPREDIEKAARDAYAMDFIAQLPEGLDTQVGENGVLLSGGQRQRLAIARALLKNAPLLILDEATSALDTESERHIQAALDQVMKGRTTLVIAHRLSTIEKADLILVMDQGRIVERGTHDDLLAQNGYYARLNAMGLDAPAEDIA.

4 consecutive transmembrane segments (helical) span residues 27 to 47 (ISLF…QPML), 83 to 103 (LLII…NYFL), 174 to 194 (LLFM…LIAV), and 267 to 287 (PLLQ…VLYL). The region spanning 31–322 (LISIVGFLIF…LSEVSSTIQK (292 aa)) is the ABC transmembrane type-1 domain. The region spanning 354-590 (LDVRNLSFTY…NGYYARLNAM (237 aa)) is the ABC transporter domain. An ATP-binding site is contributed by 388–395 (GRSGSGKS).

This sequence belongs to the ABC transporter superfamily. Lipid exporter (TC 3.A.1.106) family. In terms of assembly, homodimer.

Its subcellular location is the cell inner membrane. It carries out the reaction ATP + H2O + lipid A-core oligosaccharideSide 1 = ADP + phosphate + lipid A-core oligosaccharideSide 2.. Involved in lipopolysaccharide (LPS) biosynthesis. Translocates lipid A-core from the inner to the outer leaflet of the inner membrane. Transmembrane domains (TMD) form a pore in the inner membrane and the ATP-binding domain (NBD) is responsible for energy generation. This chain is ATP-dependent lipid A-core flippase, found in Pseudomonas fluorescens (strain Pf0-1).